The following is a 186-amino-acid chain: ATP synthase subunit delta (186 aa).

This sequence belongs to the ATPase delta chain family. As to quaternary structure, F-type ATPases have 2 components, F(1) - the catalytic core - and F(0) - the membrane proton channel. F(1) has five subunits: alpha(3), beta(3), gamma(1), delta(1), epsilon(1). F(0) has three main subunits: a(1), b(2) and c(10-14). The alpha and beta chains form an alternating ring which encloses part of the gamma chain. F(1) is attached to F(0) by a central stalk formed by the gamma and epsilon chains, while a peripheral stalk is formed by the delta and b chains.

The protein localises to the cell membrane. F(1)F(0) ATP synthase produces ATP from ADP in the presence of a proton or sodium gradient. F-type ATPases consist of two structural domains, F(1) containing the extramembraneous catalytic core and F(0) containing the membrane proton channel, linked together by a central stalk and a peripheral stalk. During catalysis, ATP synthesis in the catalytic domain of F(1) is coupled via a rotary mechanism of the central stalk subunits to proton translocation. Functionally, this protein is part of the stalk that links CF(0) to CF(1). It either transmits conformational changes from CF(0) to CF(1) or is implicated in proton conduction. This is ATP synthase subunit delta from Wolbachia pipientis wMel.